A 379-amino-acid chain; its full sequence is Chaperone protein DnaJ (379 aa).

One can recognise a J domain in the interval 5–69 (EFYDRLGVSK…QKRAAYDQYG (65 aa)). Residues 135 to 217 (GAEKEVSYNR…CHGTGHEKKT (83 aa)) form a CR-type zinc finger. Zn(2+)-binding residues include cysteine 148, cysteine 151, cysteine 165, cysteine 168, cysteine 191, cysteine 194, cysteine 205, and cysteine 208. CXXCXGXG motif repeat units lie at residues 148-155 (CHTCSGSG), 165-172 (CQKCHGSG), 191-198 (CDVCQGSG), and 205-212 (CPTCHGTG).

It belongs to the DnaJ family. As to quaternary structure, homodimer. The cofactor is Zn(2+).

The protein localises to the cytoplasm. Functionally, participates actively in the response to hyperosmotic and heat shock by preventing the aggregation of stress-denatured proteins and by disaggregating proteins, also in an autonomous, DnaK-independent fashion. Unfolded proteins bind initially to DnaJ; upon interaction with the DnaJ-bound protein, DnaK hydrolyzes its bound ATP, resulting in the formation of a stable complex. GrpE releases ADP from DnaK; ATP binding to DnaK triggers the release of the substrate protein, thus completing the reaction cycle. Several rounds of ATP-dependent interactions between DnaJ, DnaK and GrpE are required for fully efficient folding. Also involved, together with DnaK and GrpE, in the DNA replication of plasmids through activation of initiation proteins. The polypeptide is Chaperone protein DnaJ (Streptococcus agalactiae serotype III (strain NEM316)).